The following is a 231-amino-acid chain: Probable pyridoxamine 5'-phosphate oxidase (231 aa).

20 to 23 (QYEK) is a pyridoxal 5'-phosphate binding site. Position 74 to 77 (74 to 77 (RLVL)) interacts with FMN. Lysine 79 provides a ligand contact to pyridoxal 5'-phosphate. FMN-binding positions include 89–90 (FT), 96–97 (KK), and glutamine 119. Tyrosine 137, arginine 141, and serine 145 together coordinate pyridoxal 5'-phosphate. FMN is bound by residues 154–155 (QS) and tryptophan 202. 208–210 (RLH) lines the pyridoxal 5'-phosphate pocket. FMN is bound at residue arginine 212.

This sequence belongs to the pyridoxamine 5'-phosphate oxidase family. Homodimer. FMN is required as a cofactor.

It catalyses the reaction pyridoxamine 5'-phosphate + O2 + H2O = pyridoxal 5'-phosphate + H2O2 + NH4(+). The catalysed reaction is pyridoxine 5'-phosphate + O2 = pyridoxal 5'-phosphate + H2O2. It functions in the pathway cofactor metabolism; pyridoxal 5'-phosphate salvage; pyridoxal 5'-phosphate from pyridoxamine 5'-phosphate: step 1/1. Its pathway is cofactor metabolism; pyridoxal 5'-phosphate salvage; pyridoxal 5'-phosphate from pyridoxine 5'-phosphate: step 1/1. Catalyzes the oxidation of either pyridoxine 5'-phosphate (PNP) or pyridoxamine 5'-phosphate (PMP) into pyridoxal 5'-phosphate (PLP). In Schizosaccharomyces pombe (strain 972 / ATCC 24843) (Fission yeast), this protein is Probable pyridoxamine 5'-phosphate oxidase.